The following is a 132-amino-acid chain: Small ribosomal subunit protein eS12 (132 aa).

Residue Ala2 is modified to N-acetylalanine. Residue Lys129 is modified to N6-succinyllysine.

It belongs to the eukaryotic ribosomal protein eS12 family. Part of the small subunit (SSU) processome, composed of more than 70 proteins and the RNA chaperone small nucleolar RNA (snoRNA) U3. Subunit of the 40S ribosomal complex.

It is found in the nucleus. It localises to the nucleolus. Functionally, part of the small subunit (SSU) processome, first precursor of the small eukaryotic ribosomal subunit. During the assembly of the SSU processome in the nucleolus, many ribosome biogenesis factors, an RNA chaperone and ribosomal proteins associate with the nascent pre-rRNA and work in concert to generate RNA folding, modifications, rearrangements and cleavage as well as targeted degradation of pre-ribosomal RNA by the RNA exosome. Subunit of the 40S ribosomal complex. The polypeptide is Small ribosomal subunit protein eS12 (Rps12) (Mus musculus (Mouse)).